A 242-amino-acid chain; its full sequence is MTKLFIPYIMGNKDLIENATLLSENGADIIEIGVPFSDPVADGPVIMEAGQQAIKQGITIDYIFNQLEKHGDQIKCNYVLMTYYNIICHYGEQAFFEKCRDTGVYGLIIPDLPYELSQRLKQQFSHYGVKIISLVAMTTDDKRIKDIVSHAEGFIYTVTMNATTGQNGAFHPELKRKIESIKAIANVPVVAGFGIRTPQHVADIKEVADGIVIGSEIVKRFKSNTREEIIRYLQSIQQTLNN.

Catalysis depends on proton acceptor residues Glu31 and Asp42.

This sequence belongs to the TrpA family. In terms of assembly, tetramer of two alpha and two beta chains.

It catalyses the reaction (1S,2R)-1-C-(indol-3-yl)glycerol 3-phosphate + L-serine = D-glyceraldehyde 3-phosphate + L-tryptophan + H2O. Its pathway is amino-acid biosynthesis; L-tryptophan biosynthesis; L-tryptophan from chorismate: step 5/5. In terms of biological role, the alpha subunit is responsible for the aldol cleavage of indoleglycerol phosphate to indole and glyceraldehyde 3-phosphate. The protein is Tryptophan synthase alpha chain of Staphylococcus aureus (strain Mu3 / ATCC 700698).